We begin with the raw amino-acid sequence, 373 residues long: Chorismate synthase (373 aa).

R48 and R54 together coordinate NADP(+). FMN-binding positions include 125–127, 248–249, G288, 303–307, and R329; these read RSS, NA, and KPTSS.

This sequence belongs to the chorismate synthase family. Homotetramer. FMNH2 is required as a cofactor.

The catalysed reaction is 5-O-(1-carboxyvinyl)-3-phosphoshikimate = chorismate + phosphate. The protein operates within metabolic intermediate biosynthesis; chorismate biosynthesis; chorismate from D-erythrose 4-phosphate and phosphoenolpyruvate: step 7/7. Its function is as follows. Catalyzes the anti-1,4-elimination of the C-3 phosphate and the C-6 proR hydrogen from 5-enolpyruvylshikimate-3-phosphate (EPSP) to yield chorismate, which is the branch point compound that serves as the starting substrate for the three terminal pathways of aromatic amino acid biosynthesis. This reaction introduces a second double bond into the aromatic ring system. In Colwellia psychrerythraea (strain 34H / ATCC BAA-681) (Vibrio psychroerythus), this protein is Chorismate synthase.